The sequence spans 643 residues: Complement component C1q receptor (643 aa).

An N-terminal signal peptide occupies residues 1–23; the sequence is MVTSTGLLLLLGLLGQLWAGAAA. Over 24–571 the chain is Extracellular; sequence DSEAVVCEGT…HSDSDTDGQK (548 aa). The 143-residue stretch at 31–173 folds into the C-type lectin domain; it reads EGTACYTAHW…CGTPDAPGNS (143 aa). 16 cysteine pairs are disulfide-bonded: Cys140–Cys164, Cys261–Cys272, Cys268–Cys282, Cys284–Cys297, Cys303–Cys314, Cys308–Cys325, Cys327–Cys340, Cys346–Cys355, Cys351–Cys364, Cys366–Cys380, Cys386–Cys397, Cys393–Cys406, Cys408–Cys422, Cys428–Cys437, Cys433–Cys446, and Cys448–Cys461. 2 EGF-like domains span residues 257-298 and 299-341; these read PKFG…VTCA and SRNP…VHCV. N-linked (GlcNAc...) asparagine glycosylation occurs at Asn322. One can recognise an EGF-like 3; calcium-binding domain in the interval 342–381; it reads DIDECEDSPCDQECINTPGGFHCECWVGYQSSGSKEEACE. Residues 382-423 enclose the EGF-like 4; calcium-binding domain; sequence DVDECTAAYSPCAQGCTNTDGSFYCSCKEGYIMSGEDSTQCE. Positions 424–462 constitute an EGF-like 5; calcium-binding domain; sequence DIDECLGNPCDTLCINTDGSFRCGCPAGFELAPNGVSCT. A disordered region spans residues 469-517; it reads ELPARPPQKEDKGDGKESTVPLTEMPGSLNGSKDVSNRAQTTDLSIQSD. Residues 475–485 show a composition bias toward basic and acidic residues; the sequence is PQKEDKGDGKE. Over residues 497–517 the composition is skewed to polar residues; the sequence is LNGSKDVSNRAQTTDLSIQSD. An N-linked (GlcNAc...) asparagine glycan is attached at Asn498. Residues 572 to 592 traverse the membrane as a helical segment; the sequence is LLLFYILGTVVAISLLLALAL. Residues 593–643 are Cytoplasmic-facing; it reads GLLIYLKRKAKKEEIKEKKAQNAADSYSWIPERAESRAPENQYSPTPGTDC. A disordered region spans residues 606–643; that stretch reads EIKEKKAQNAADSYSWIPERAESRAPENQYSPTPGTDC. A Phosphoserine modification is found at Ser618. A phosphotyrosine mark is found at Tyr619 and Tyr635. Polar residues predominate over residues 631–643; that stretch reads PENQYSPTPGTDC.

In terms of assembly, homodimer. Interacts with C1QBP; the association may represent a cell surface C1q receptor. Interacts with surfactant protein A/SFTPA1. Interacts with multimerin-2/MMRN2. Interacts with DAG1; this interaction plays an important role in endothelial cell migration. Interacts with CBL. Interacts with IGFBP7. Interacts with VEGFR2. N- and O-glycosylated. In terms of processing, phosphorylated on Tyr-619 and Tyr-635 by SRC; these phosphorylations promote endothelial cell adhesion and migration. Widely expressed. Highly expressed in lung and heart. Expressed at lower level in brain, thymus, liver, spleen, intestine, kidney, adrenal gland, muscle and testis. Expressed on endothelial cells, platelets, undifferentiated monocytes and circulating natural killer cells.

It is found in the cell membrane. In terms of biological role, cell surface receptor that plays a role in various physiological processes including inflammation, phagocytosis, and cell adhesion. Plays a role in phagocytosis and enhances the uptake of apoptotic cells and immune complexes by acting as a receptor for defense collagens including surfactant protein A/SFTPA1, C1q, and mannose-binding lectin (MBL2). Plays a role in the regulation of endothelial cell function and adhesion by activating angiogenesis. Mechanistically, exerts its angiogenic function by associating with beta-dystroglycan, leading to SRC-dependent phosphorylation and subsequent recruitment of CBL. In turn, CBL provides a docking site for downstream signaling components, such as CRKL to enhance cell migration. Participates in angiogenesis also by acting as a receptor for the ECM pan-endothelial glycoprotein multimerin-2/MMRN2 and IGFBP7 ligands. Both ligands play a non-redundant role in CD93-mediated endothelial cell function. Acts as a key regulator of endothelial barrier function through modulating VEGFR2 function. The sequence is that of Complement component C1q receptor (Cd93) from Rattus norvegicus (Rat).